A 218-amino-acid polypeptide reads, in one-letter code: Adenylate kinase (218 aa).

10-15 lines the ATP pocket; the sequence is GAGKGT. Residues 30 to 59 form an NMP region; it reads STGDMLRAAVKAGSPLGLKVKEVMATGGLV. AMP contacts are provided by residues Thr31, Arg36, 57-59, 85-88, and Gln92; these read GLV and GFPR. Residues 122-159 form an LID region; it reads GRRVHEASGRVYHVDYNPPKVEGKDDVTGEPLVQREDD. ATP contacts are provided by residues Arg123 and 132-133; that span reads VY. Residues Arg156 and Arg167 each contribute to the AMP site. Gly203 lines the ATP pocket.

This sequence belongs to the adenylate kinase family. In terms of assembly, monomer.

The protein resides in the cytoplasm. The enzyme catalyses AMP + ATP = 2 ADP. The protein operates within purine metabolism; AMP biosynthesis via salvage pathway; AMP from ADP: step 1/1. Its function is as follows. Catalyzes the reversible transfer of the terminal phosphate group between ATP and AMP. Plays an important role in cellular energy homeostasis and in adenine nucleotide metabolism. The chain is Adenylate kinase from Hahella chejuensis (strain KCTC 2396).